A 415-amino-acid chain; its full sequence is Acetate kinase (415 aa).

Asparagine 8 contacts Mg(2+). Position 15 (lysine 15) interacts with ATP. Substrate is bound at residue arginine 106. Aspartate 163 functions as the Proton donor/acceptor in the catalytic mechanism. Residues 222 to 226 (HLGNG), 296 to 298 (DLR), and 344 to 348 (GIGEN) contribute to the ATP site. Glutamate 397 provides a ligand contact to Mg(2+).

The protein belongs to the acetokinase family. In terms of assembly, homodimer. It depends on Mg(2+) as a cofactor. The cofactor is Mn(2+).

It is found in the cytoplasm. It catalyses the reaction acetate + ATP = acetyl phosphate + ADP. The protein operates within metabolic intermediate biosynthesis; acetyl-CoA biosynthesis; acetyl-CoA from acetate: step 1/2. In terms of biological role, catalyzes the formation of acetyl phosphate from acetate and ATP. Can also catalyze the reverse reaction. This is Acetate kinase from Thermosynechococcus vestitus (strain NIES-2133 / IAM M-273 / BP-1).